Here is a 543-residue protein sequence, read N- to C-terminus: Biotinidase (543 aa).

Residues 1-41 (MAHAHIQGGRRAKSRFVVCIMSGARSKLALFLCGCYVVALG) form the signal peptide. In terms of domain architecture, CN hydrolase spans 72-351 (NPLALISRQE…VGLIGAENAT (280 aa)). The Proton acceptor role is filled by Glu-112. Asn-119 carries an N-linked (GlcNAc...) asparagine glycan. N-linked (GlcNAc...) (complex) asparagine glycosylation is present at Asn-150. The N-linked (GlcNAc...) asparagine glycan is linked to Asn-203. Lys-212 functions as the Proton donor in the catalytic mechanism. Cys-245 serves as the catalytic Nucleophile. 3 N-linked (GlcNAc...) asparagine glycosylation sites follow: Asn-349, Asn-402, and Asn-489.

This sequence belongs to the carbon-nitrogen hydrolase superfamily. BTD/VNN family.

The protein localises to the secreted. Its subcellular location is the extracellular space. The catalysed reaction is biocytin + H2O = biotin + L-lysine. The enzyme catalyses biotin amide + H2O = biotin + NH4(+). Functionally, catalytic release of biotin from biocytin, the product of biotin-dependent carboxylases degradation. This is Biotinidase from Homo sapiens (Human).